Here is a 408-residue protein sequence, read N- to C-terminus: 3-phosphoshikimate 1-carboxyvinyltransferase (408 aa).

3 residues coordinate 3-phosphoshikimate: Lys-20, Ser-21, and Arg-25. Lys-20 provides a ligand contact to phosphoenolpyruvate. A phosphoenolpyruvate-binding site is contributed by Arg-111. Residues Ser-151, Ser-152, Gln-153, Ser-178, Asp-293, and Lys-320 each contribute to the 3-phosphoshikimate site. Gln-153 is a phosphoenolpyruvate binding site. The Proton acceptor role is filled by Asp-293. Residues Arg-324, Arg-365, and Lys-389 each coordinate phosphoenolpyruvate.

This sequence belongs to the EPSP synthase family. Monomer.

The protein localises to the cytoplasm. It carries out the reaction 3-phosphoshikimate + phosphoenolpyruvate = 5-O-(1-carboxyvinyl)-3-phosphoshikimate + phosphate. It participates in metabolic intermediate biosynthesis; chorismate biosynthesis. In terms of biological role, catalyzes the transfer of the enolpyruvyl moiety of phosphoenolpyruvate (PEP) to the 5-hydroxyl of shikimate-3-phosphate (S3P) to produce enolpyruvyl shikimate-3-phosphate and inorganic phosphate. The polypeptide is 3-phosphoshikimate 1-carboxyvinyltransferase (Sulfurisphaera tokodaii (strain DSM 16993 / JCM 10545 / NBRC 100140 / 7) (Sulfolobus tokodaii)).